Reading from the N-terminus, the 96-residue chain is Muconolactone Delta-isomerase (96 aa).

The protein belongs to the muconolactone Delta-isomerase family. Homodecamer.

The enzyme catalyses (S)-muconolactone = (4,5-dihydro-5-oxofuran-2-yl)-acetate. The protein operates within aromatic compound metabolism; beta-ketoadipate pathway; 5-oxo-4,5-dihydro-2-furylacetate from catechol: step 3/3. This is Muconolactone Delta-isomerase (catC) from Acinetobacter baylyi (strain ATCC 33305 / BD413 / ADP1).